The chain runs to 446 residues: Replication-associated recombination protein A (446 aa).

An ATP-binding site is contributed by 57 to 64 (GPPGTGKT).

It belongs to the AAA ATPase family. RarA/MGS1/WRNIP1 subfamily.

DNA-dependent ATPase that plays important roles in cellular responses to stalled DNA replication processes. In Haemophilus influenzae (strain ATCC 51907 / DSM 11121 / KW20 / Rd), this protein is Replication-associated recombination protein A (rarA).